Reading from the N-terminus, the 414-residue chain is MSYYDTIFSKHIDKIKSEGRYREFKALKRQADNFPFAEHANKQIVMWCINDYLGMSKHAKVMQASIDALLKYGVGSGGTRNIGGNNIAILELEKELADLHKKQAALVFTSGFVANDTTLASLAKIMPDIVFFSDELNHASIIAGVTSSRAEKYIYRHLDVKHLEELLQSVDINRPKIIVFESAYSMDGFFSPIKDIINLAKKYNALTFIDEVHTVGLYGKHGGGIAELLNCSDQIDIIQGTLAKAYGTIGGYITSNHNLVDAIRLTAPGFIFTTSLPPVISTAATHSIRHLKESNEERIKHQEVVTKLKNSFENFNIPYLKNESHIVPIIIGDPIKAASASNMLLNKYGIYVQHINFPTVPRGTERLRIIPTPAHTDKMINDLSIALVHIFAELDIELSSTKELNEEIRLNLIA.

Arginine 22, serine 133, and lysine 152 together coordinate substrate. 3 residues coordinate pyridoxal 5'-phosphate: serine 185, histidine 213, and threonine 241. Lysine 244 is an active-site residue. Position 244 is an N6-(pyridoxal phosphate)lysine (lysine 244). Pyridoxal 5'-phosphate is bound by residues threonine 273 and threonine 274. Threonine 359 is a binding site for substrate.

It belongs to the class-II pyridoxal-phosphate-dependent aminotransferase family. As to quaternary structure, homodimer. Requires pyridoxal 5'-phosphate as cofactor.

The enzyme catalyses succinyl-CoA + glycine + H(+) = 5-aminolevulinate + CO2 + CoA. It functions in the pathway porphyrin-containing compound metabolism; protoporphyrin-IX biosynthesis; 5-aminolevulinate from glycine: step 1/1. This is 5-aminolevulinate synthase (hemA) from Rickettsia felis (strain ATCC VR-1525 / URRWXCal2) (Rickettsia azadi).